A 119-amino-acid polypeptide reads, in one-letter code: Protein TusC (119 aa).

Belongs to the DsrF/TusC family. As to quaternary structure, heterohexamer, formed by a dimer of trimers. The hexameric TusBCD complex contains 2 copies each of TusB, TusC and TusD. The TusBCD complex interacts with TusE.

Its subcellular location is the cytoplasm. Part of a sulfur-relay system required for 2-thiolation of 5-methylaminomethyl-2-thiouridine (mnm(5)s(2)U) at tRNA wobble positions. This is Protein TusC from Klebsiella pneumoniae subsp. pneumoniae (strain ATCC 700721 / MGH 78578).